The following is a 382-amino-acid chain: Mannitol-1-phosphate 5-dehydrogenase (382 aa).

3-14 (ALHFGAGNIGRG) lines the NAD(+) pocket.

It belongs to the mannitol dehydrogenase family.

The enzyme catalyses D-mannitol 1-phosphate + NAD(+) = beta-D-fructose 6-phosphate + NADH + H(+). This is Mannitol-1-phosphate 5-dehydrogenase from Salmonella schwarzengrund (strain CVM19633).